The sequence spans 94 residues: Integration host factor subunit beta (94 aa).

This sequence belongs to the bacterial histone-like protein family. As to quaternary structure, heterodimer of an alpha and a beta chain.

Functionally, this protein is one of the two subunits of integration host factor, a specific DNA-binding protein that functions in genetic recombination as well as in transcriptional and translational control. The polypeptide is Integration host factor subunit beta (Caulobacter sp. (strain K31)).